Here is a 338-residue protein sequence, read N- to C-terminus: Fructose-1,6-bisphosphatase class 1 (338 aa).

Residues Glu92, Asp115, Leu117, and Asp118 each contribute to the Mg(2+) site. Residues 118–121 (DGSS), Asn211, Tyr244, and Lys274 each bind substrate. Mg(2+) is bound at residue Glu280.

The protein belongs to the FBPase class 1 family. In terms of assembly, homotetramer. Requires Mg(2+) as cofactor.

It is found in the cytoplasm. The enzyme catalyses beta-D-fructose 1,6-bisphosphate + H2O = beta-D-fructose 6-phosphate + phosphate. It participates in carbohydrate biosynthesis; gluconeogenesis. This is Fructose-1,6-bisphosphatase class 1 from Photobacterium profundum (strain SS9).